Reading from the N-terminus, the 230-residue chain is 2,3-bisphosphoglycerate-dependent phosphoglycerate mutase 1 (230 aa).

Substrate contacts are provided by residues 8-15 (RHGQSEWN), 21-22 (TG), R60, 87-90 (ERHY), K98, 114-115 (RR), and 183-184 (GN). The Tele-phosphohistidine intermediate role is filled by H9. The Proton donor/acceptor role is filled by E87.

The protein belongs to the phosphoglycerate mutase family. BPG-dependent PGAM subfamily.

The catalysed reaction is (2R)-2-phosphoglycerate = (2R)-3-phosphoglycerate. It functions in the pathway carbohydrate degradation; glycolysis; pyruvate from D-glyceraldehyde 3-phosphate: step 3/5. Its function is as follows. Catalyzes the interconversion of 2-phosphoglycerate and 3-phosphoglycerate. The chain is 2,3-bisphosphoglycerate-dependent phosphoglycerate mutase 1 from Lactobacillus johnsonii (strain CNCM I-12250 / La1 / NCC 533).